The chain runs to 305 residues: MHYSVLLQESINDLNINPQGIYIDATFGRGGHSKAILNRLTTGRLIAFDKDLDAISYARENFQFSNFEIVHASFASIYDYCLQHSLLGKIDGIIMDLGVSSPQLDNAARGFSFTHNGPLDMRMDVSKGITASQALEELSVDDLSYIFKVYGEERFAKKIALRIKDYIQQNGSIRTTLELAELIRATIGKKEKKNPATRCFQALRIYVNNELKDLEALLENILAVIKSGGRIAAISFHSLEDRIVKQKFSALINPKQELNRITKMLPQDSSQIKLKWITKKSKANEDELNQNVRSRSAILRVVEKL.

S-adenosyl-L-methionine contacts are provided by residues 30-32, aspartate 49, phenylalanine 74, aspartate 96, and glutamine 103; that span reads GGH.

Belongs to the methyltransferase superfamily. RsmH family.

It localises to the cytoplasm. It carries out the reaction cytidine(1402) in 16S rRNA + S-adenosyl-L-methionine = N(4)-methylcytidine(1402) in 16S rRNA + S-adenosyl-L-homocysteine + H(+). Specifically methylates the N4 position of cytidine in position 1402 (C1402) of 16S rRNA. The protein is Ribosomal RNA small subunit methyltransferase H of Francisella tularensis subsp. mediasiatica (strain FSC147).